The following is a 406-amino-acid chain: Phosphopentomutase (406 aa).

Residues Asp-10, Asp-305, His-310, Asp-346, His-347, and His-358 each coordinate Mn(2+).

Belongs to the phosphopentomutase family. It depends on Mn(2+) as a cofactor.

Its subcellular location is the cytoplasm. The catalysed reaction is 2-deoxy-alpha-D-ribose 1-phosphate = 2-deoxy-D-ribose 5-phosphate. It catalyses the reaction alpha-D-ribose 1-phosphate = D-ribose 5-phosphate. Its pathway is carbohydrate degradation; 2-deoxy-D-ribose 1-phosphate degradation; D-glyceraldehyde 3-phosphate and acetaldehyde from 2-deoxy-alpha-D-ribose 1-phosphate: step 1/2. Isomerase that catalyzes the conversion of deoxy-ribose 1-phosphate (dRib-1-P) and ribose 1-phosphate (Rib-1-P) to deoxy-ribose 5-phosphate (dRib-5-P) and ribose 5-phosphate (Rib-5-P), respectively. The sequence is that of Phosphopentomutase from Rhizobium meliloti (strain 1021) (Ensifer meliloti).